The following is a 670-amino-acid chain: Transketolase, chromosomal (670 aa).

Substrate is bound at residue His32. Thiamine diphosphate contacts are provided by residues His72 and 120–122 (GPL). Asp161 is a binding site for Mg(2+). Thiamine diphosphate is bound by residues Gly162 and Asn191. 2 residues coordinate Mg(2+): Asn191 and Ile193. His267, Arg364, and Ser391 together coordinate substrate. His267 contacts thiamine diphosphate. Glu417 serves as the catalytic Proton donor. Phe443 is a binding site for thiamine diphosphate. Substrate is bound by residues His467, Asp475, and Arg526.

The protein belongs to the transketolase family. As to quaternary structure, homodimer. Mg(2+) is required as a cofactor. The cofactor is Ca(2+). It depends on Mn(2+) as a cofactor. Co(2+) serves as cofactor. Requires thiamine diphosphate as cofactor.

It catalyses the reaction D-sedoheptulose 7-phosphate + D-glyceraldehyde 3-phosphate = aldehydo-D-ribose 5-phosphate + D-xylulose 5-phosphate. Its pathway is carbohydrate biosynthesis; Calvin cycle. Its function is as follows. Catalyzes the transfer of a two-carbon ketol group from a ketose donor to an aldose acceptor, via a covalent intermediate with the cofactor thiamine pyrophosphate. The sequence is that of Transketolase, chromosomal (cbbTC) from Cupriavidus necator (strain ATCC 17699 / DSM 428 / KCTC 22496 / NCIMB 10442 / H16 / Stanier 337) (Ralstonia eutropha).